The sequence spans 405 residues: Glutathione S-transferase LANCL1 (405 aa).

Cys282 lines the Zn(2+) pocket. Residue Lys323 participates in glutathione binding. Positions 328 and 329 each coordinate Zn(2+). 370–373 (RTPD) provides a ligand contact to glutathione.

It belongs to the LanC-like protein family.

Its subcellular location is the cytoplasm. The protein resides in the cell membrane. The catalysed reaction is RX + glutathione = an S-substituted glutathione + a halide anion + H(+). The enzyme catalyses 1-chloro-2,4-dinitrobenzene + glutathione = 2,4-dinitrophenyl-S-glutathione + chloride + H(+). In terms of biological role, functions as a glutathione transferase. Catalyzes conjugation of the glutathione (GSH) to artificial substrates 1-chloro-2,4-dinitrobenzene (CDNB) and p-nitrophenyl acetate. Binds glutathione. This chain is Glutathione S-transferase LANCL1, found in Danio rerio (Zebrafish).